We begin with the raw amino-acid sequence, 721 residues long: MDQTMRDKLSQLVEELTTSGEPQLNQDKMKEVKKICRVSDSYIDHFYHLIMTQLNQEHAEIRLSAFQMVNEVFSRSHHFRVLLITNFQEFLELTVETDAEQPLPPPKEVARKLRTLAIQTVQSWHATYGEAYKKLSLGYHFLKQIKKVDFQDVEARTLAERKRQEEKQKRLERIYKEKLDKAKQEMEEMTSGIEETLTEMNNCIRLLATDDFNLFDEDSAASISTTAEDQSDQPCCSKDLSNEHNGKMMEKKTDKEQTDESSDESDMEEVPDEDAFLRSTGLMSYRYQLELDVSADLKVRETEENEALVNTVRDLHRLVTTRHLPLVQSWVQVFTKVGVEEELMRRATELKKSLEHVLRKHEYLHIDYKDRERLVMRAPEDGEDDDDDFVDVPEKEGYEPHIPEHLRTEYGLDETPSTSTSGTKAKPSRPVVKCAVPPVSSSLSRLKRRMCDEEQDPTCAAATLRVLKQKLHPAPSTSVPDGSSESAVSSSDQSNMTKNKASFKAPVIPFGMDLYYWGEEQPTAGKIIKQTSQHQFWVPHEVEEEVENKELSAQMKSRCITYAGKFKPVEHKCKAPMPNGSLCERQDRVKCPFHGHIIPRDELGRPVNPEDALRLEREKRKREEEQPDWRDPELMREIEAATGEDLGSSKTYGKGKKGNKGKSKKKYPNLTDLKQKANTSRSRLEKKVFNKSSMRRVTEVMNKMDKRKHEKFANQFNYALN.

The interval 6-149 (RDKLSQLVEE…HFLKQIKKVD (144 aa)) is VHS-like. A coiled-coil region spans residues 155–203 (ARTLAERKRQEEKQKRLERIYKEKLDKAKQEMEEMTSGIEETLTEMNNC). Residues 223–234 (ISTTAEDQSDQP) are compositionally biased toward polar residues. Positions 223–272 (ISTTAEDQSDQPCCSKDLSNEHNGKMMEKKTDKEQTDESSDESDMEEVPD) are disordered. Residues 240–258 (LSNEHNGKMMEKKTDKEQT) show a composition bias toward basic and acidic residues. Positions 259-272 (DESSDESDMEEVPD) are enriched in acidic residues. Lys-395 participates in a covalent cross-link: Glycyl lysine isopeptide (Lys-Gly) (interchain with G-Cter in ubiquitin). 2 disordered regions span residues 409-433 (EYGL…PVVK) and 472-498 (HPAP…NMTK). The segment covering 478–494 (SVPDGSSESAVSSSDQS) has biased composition (low complexity). The segment at 570–597 (EHKCKAPMPNGSLCERQDRVKCPFHGHI) adopts a UVSSA-type zinc-finger fold. Zn(2+)-binding residues include Cys-573, Cys-583, Cys-591, and His-594. Disordered stretches follow at residues 616 to 635 (EREK…PELM) and 641 to 721 (ATGE…YALN). Over residues 653-667 (GKGKKGNKGKSKKKY) the composition is skewed to basic residues.

The protein belongs to the UVSSA family. Monoubiquitinated at Lys-395 in response to transcription stress; this promotes efficient transfer of TFIIH to stalled RNA polymerase II.

The protein resides in the chromosome. In terms of biological role, factor involved in transcription-coupled nucleotide excision repair (TC-NER), a mechanism that rapidly removes RNA polymerase II-blocking lesions from the transcribed strand of active genes. Acts as a key adapter that promotes recruitment of factors involved in TC-NER. Facilitates the ubiquitination of the elongating form of RNA polymerase II (RNA pol IIo) at DNA damage sites, thereby promoting RNA pol IIo backtracking and access by the TC-NER machinery to lesion sites. Also promotes stabilization of ERCC6/CSB by recruiting deubiquitinating enzyme USP7 to TC-NER complexes, preventing UV-induced degradation of ERCC6 by the proteasome. Mediates the recruitment of the TFIIH complex and other factors that are required for nucleotide excision repair to RNA polymerase II. Also required to inactivate stalled RNA polymerase II by blocking the access of TCEA1/TFIIS, thereby preventing reactivation of RNA polymerase II. The protein is UV-stimulated scaffold protein A (uvssa) of Danio rerio (Zebrafish).